Consider the following 346-residue polypeptide: Lipase chaperone (346 aa).

A helical membrane pass occupies residues 10–30 (TIVFGVITSVLLLLLLIYYVF).

This sequence belongs to the lipase chaperone family.

Its subcellular location is the cell inner membrane. In terms of biological role, may be involved in the folding of the extracellular lipase during its passage through the periplasm. In Acinetobacter venetianus (strain ATCC 31012 / DSM 23050 / BCRC 14357 / CCUG 45561 / CIP 110063 / KCTC 2702 / LMG 19082 / RAG-1), this protein is Lipase chaperone (lifO).